The following is a 226-amino-acid chain: MNFSKNLPLLVSLWAITFFAYTHAATFDIVNQCTYTVWAAASPGGGRRLDQGQSWNINVAPGTTQARIWGRTNCNFDANGRGQCETGDCNGLLECQGYGRPPNTLAEFALNQPNNLDFVDISNVDGFNIPLEFSPTTNVCRRLVCNAPIVQQCPSELRTPGGCNNPCTVFNTNEYCCTNGPGSCGPTPLSRFFKERCPDAYSYPQDDPTSLFTCPAGTNYRVVFCP.

The first 24 residues, 1-24 (MNFSKNLPLLVSLWAITFFAYTHA), serve as a signal peptide directing secretion. 8 cysteine pairs are disulfide-bonded: cysteine 33/cysteine 225, cysteine 74/cysteine 84, cysteine 89/cysteine 95, cysteine 140/cysteine 214, cysteine 145/cysteine 197, cysteine 153/cysteine 163, cysteine 167/cysteine 176, and cysteine 177/cysteine 184.

This sequence belongs to the thaumatin family. In terms of tissue distribution, expressed in fruits.

The protein localises to the secreted. 3D-structure modeling suggests it may have endo-(1,3)-beta-glucanase activity. The protein is Thaumatin-like protein of Olea europaea (Common olive).